Here is a 24-residue protein sequence, read N- to C-terminus: Humanin (24 aa).

The interval Met1 to Leu12 is sufficient to interact with BID and BIM and to suppress BID and BIM activity. The interval Pro3–Pro19 is sufficient for neuroprotective activity. The interval Gly5 to Leu12 is sufficient to interact with MPP8. Required for secretion regions lie at residues Leu9–Leu11 and Pro19–Val20.

As to quaternary structure, homodimer. Interacts with amyloid-beta protein 42 (Abeta42); the interaction prevents Abeta42 fibril formation. Interacts with BAX; forms fibers with BAX which results in BAX conformational changes and sequestering of BAX into the fibers, preventing BAX activation. Interacts with both full-length BID and cleaved BID p15; forms fibers with BID which results in BID conformational changes and sequestering of BID into the fibers, preventing BID activation. Interacts with BIM isoform BimEL but not with BIM isoforms BimL or BimS; the interaction prevents BIM-induced apoptosis. Interacts with IGFBP3; competes with importin KPNB1 for binding to IGFBP3, blocking IGFBP3 nuclear import. Interacts with TRIM11. Interacts with MPP8. As to expression, expressed in testis, seminal plasma and sperm (at protein level). Higher seminal plasma levels are associated with normospermia than with oligospermia, asthenospermia or oligoasthenospermia (at protein level). Higher sperm levels are associated with normospermia than with asthenospermia (at protein level). Expressed in retinal epithelial cells (at protein level). Expressed in the heart, skeletal muscle, kidney and liver. Lesser but significant expression is observed in the brain and the gastrointestinal tract. Expressed in the AD brain, where it is found in some of the large intact neurons of the occipital lobes and small and round reactive glial cells in the hippocampus.

It localises to the secreted. The protein localises to the cytoplasm. The protein resides in the cell projection. Its subcellular location is the cilium. It is found in the flagellum. It localises to the nucleus. The protein localises to the mitochondrion. Plays a role as a neuroprotective factor. Protects against neuronal cell death induced by multiple different familial Alzheimer disease genes and amyloid-beta proteins in Alzheimer disease. Mediates its neuroprotective effect by interacting with a receptor complex composed of IL6ST/GP130, IL27RA/WSX1 and CNTFR. Also acts as a ligand for G-protein coupled receptors FPR2/FPRL1 and FPR3/FPRL2. Inhibits amyloid-beta protein 40 fibril formation. Also inhibits amyloid-beta protein 42 fibril formation. Suppresses apoptosis by binding to BAX and preventing the translocation of BAX from the cytosol to mitochondria. Also suppresses apoptosis by binding to BID and inhibiting the interaction of BID with BAX and BAK which prevents oligomerization of BAX and BAK and suppresses release of apoptogenic proteins from mitochondria. Forms fibers with BAX and also with BID, inducing BAX and BID conformational changes and sequestering them into the fibers which prevents their activation. Can also suppress apoptosis by interacting with BIM isoform BimEL, inhibiting BimEL-induced activation of BAX, blocking oligomerization of BAX and BAK, and preventing release of apoptogenic proteins from mitochondria. Plays a role in up-regulation of anti-apoptotic protein BIRC6/APOLLON, leading to inhibition of neuronal cell death. Binds to IGFBP3 and specifically blocks IGFBP3-induced cell death. Competes with importin KPNB1 for binding to IGFBP3 which is likely to block IGFBP3 nuclear import. Induces chemotaxis of mononuclear phagocytes via FPR2/FPRL1. Reduces aggregation and fibrillary formation by suppressing the effect of APP on mononuclear phagocytes and acts by competitively inhibiting the access of FPR2 to APP. Protects retinal pigment epithelium (RPE) cells against oxidative stress-induced and endoplasmic reticulum (ER) stress-induced apoptosis. Promotes mitochondrial biogenesis in RPE cells following oxidative stress and promotes STAT3 phosphorylation which leads to inhibition of CASP3 release. Also reduces CASP4 levels in RPE cells, suppresses ER stress-induced mitochondrial superoxide production and plays a role in up-regulation of mitochondrial glutathione. Reduces testicular hormone deprivation-induced apoptosis of germ cells at the nonandrogen-sensitive stages of the seminiferous epithelium cycle. Protects endothelial cells against free fatty acid-induced inflammation by suppressing oxidative stress, reducing expression of TXNIP and inhibiting activation of the NLRP3 inflammasome which inhibits expression of pro-inflammatory cytokines IL1B and IL18. Protects against high glucose-induced endothelial cell dysfunction by mediating activation of ERK5 which leads to increased expression of transcription factor KLF2 and prevents monocyte adhesion to endothelial cells. Inhibits the inflammatory response in astrocytes. Increases the expression of PPARGC1A/PGC1A in pancreatic beta cells which promotes mitochondrial biogenesis. Increases insulin sensitivity. The polypeptide is Humanin (Homo sapiens (Human)).